A 237-amino-acid chain; its full sequence is Uridylate kinase (237 aa).

Residue 12–15 (KLSG) coordinates ATP. Residue Gly53 coordinates UMP. The ATP site is built by Gly54 and Arg58. UMP-binding positions include Asp73 and 134 to 141 (TGNPYFTT). 3 residues coordinate ATP: Thr161, Tyr167, and Asp170.

Belongs to the UMP kinase family. Homohexamer.

The protein localises to the cytoplasm. The enzyme catalyses UMP + ATP = UDP + ADP. Its pathway is pyrimidine metabolism; CTP biosynthesis via de novo pathway; UDP from UMP (UMPK route): step 1/1. Its activity is regulated as follows. Inhibited by UTP. Catalyzes the reversible phosphorylation of UMP to UDP. The chain is Uridylate kinase from Rhizorhabdus wittichii (strain DSM 6014 / CCUG 31198 / JCM 15750 / NBRC 105917 / EY 4224 / RW1) (Sphingomonas wittichii).